The chain runs to 299 residues: Endonuclease G, mitochondrial (299 aa).

A mitochondrion-targeting transit peptide spans 1-48 (MQLLRAGLTLALGAGLGAAAESWWRQRADARATPGLLSRLPVLPVAAA). Thr-130 carries the post-translational modification Phosphothreonine. The Proton acceptor role is filled by His-143. Asn-174 is a Mg(2+) binding site. Residues 288-298 (AGSLKAITAGS) are essential for deoxyribonuclease activity. Ser-290 bears the Phosphoserine mark.

Belongs to the DNA/RNA non-specific endonuclease family. As to quaternary structure, homodimer; disulfide-linked. Homodimerization is essential for its activity. Interacts with YWHAG. The cofactor is Mg(2+). GSK3-beta-mediated dual phosphorylations at Thr-130 and Ser-290 is necessary for its interaction with YWHAG and the induction of autophagy.

It localises to the mitochondrion. Endonuclease that preferentially catalyzes the cleavage of double-stranded 5-hydroxymethylcytosine (5hmC)-modified DNA. The 5hmC-modified nucleotide does not increase the binding affinity, but instead increases the efficiency of cutting and specifies the site of cleavage for the modified DNAs. Shows significantly higher affinity for four- stranded Holliday junction over duplex and single-stranded DNAs. Promotes conservative recombination when the DNA is 5hmC-modified. Promotes autophagy through the suppression of mTOR by its phosphorylation-mediated interaction with YWHAG and its endonuclease activity-mediated DNA damage response. GSK3-beta mediated phosphorylation of ENDOG enhances its interaction with YWHAG, leading to the release of TSC2 and PIK3C3 from YWHAG resulting in mTOR pathway suppression and autophagy initiation. Promotes cleavage of mtDNA in response to oxidative and nitrosative stress, in turn inducing compensatory mtDNA replication. The protein is Endonuclease G, mitochondrial (ENDOG) of Bos taurus (Bovine).